The primary structure comprises 540 residues: MLFCDDSKKYLKEQNINLKNEFDKDDKRVEKFSLKHQNIYFDYSKNLINDYILKSLLESAEKSSLKDKIKQMFNGAKINSTEHRAVLHTALRDLSSTPLIVDGQDIRQEVTKEKQRVKELVEKVVSGRWRGFSGKKITDIVNIGIGGSDLGPKMVVRALQPYHCTDLKVHFVSNVDADSLLQALHVVDPETTLFIIASKSFSTEETLLNSISAREWLLDHYEDEKAVANHFVAISSKLDKVKEFGIDLEHCYKMWDWVGGRYSLWSSIGMSIAFAIGYDNFEKLLAGAYSVDKHFKETEFSKNIPVIMALLASYYSCTYNSQSQALLPYDERLCYFVDYLQQADMESNGKSVNIAGETVNYQTGVVLWGGVGTNGQHAFHQLLHQGNIFIPVDFIAIATSHHNYDNHQQALLANCFAQSQALMFGQSYDMVYNELLKSGLNETQAKELAAHKVIPGNRPSTTILLDELSPYSLGVLIALYEHKIFVQGVLWDINSYDQWGVELGKKLGKNILKAMNDDSSDEYQNLDDSTRQLIAKVKNK.

E346 acts as the Proton donor in catalysis. Catalysis depends on residues H377 and K505.

It belongs to the GPI family.

The protein localises to the cytoplasm. The catalysed reaction is alpha-D-glucose 6-phosphate = beta-D-fructose 6-phosphate. Its pathway is carbohydrate biosynthesis; gluconeogenesis. It functions in the pathway carbohydrate degradation; glycolysis; D-glyceraldehyde 3-phosphate and glycerone phosphate from D-glucose: step 2/4. Functionally, catalyzes the reversible isomerization of glucose-6-phosphate to fructose-6-phosphate. The sequence is that of Glucose-6-phosphate isomerase from Francisella tularensis subsp. tularensis (strain WY96-3418).